The chain runs to 274 residues: Elongation factor Ts (274 aa).

Residues 82–85 (TDFV) form an involved in Mg(2+) ion dislocation from EF-Tu region.

It belongs to the EF-Ts family.

Its subcellular location is the cytoplasm. In terms of biological role, associates with the EF-Tu.GDP complex and induces the exchange of GDP to GTP. It remains bound to the aminoacyl-tRNA.EF-Tu.GTP complex up to the GTP hydrolysis stage on the ribosome. This Flavobacterium psychrophilum (strain ATCC 49511 / DSM 21280 / CIP 103535 / JIP02/86) protein is Elongation factor Ts.